A 319-amino-acid chain; its full sequence is Mitochondrial fission regulator 1-like-A (319 aa).

A disordered region spans residues 1–37 (MASLGAAAEPERNLFGKDEAEAYESPEGRRSGRKKRT). The span at 9 to 30 (EPERNLFGKDEAEAYESPEGRR) shows a compositional bias: basic and acidic residues.

The protein belongs to the MTFR1 family.

The protein resides in the mitochondrion outer membrane. Mitochondrial protein required for adaptation of miochondrial dynamics to metabolic changes. Regulates mitochondrial morphology at steady state and mediates AMPK-dependent stress-induced mitochondrial fragmentation via the control of OPA1 levels. This Xenopus laevis (African clawed frog) protein is Mitochondrial fission regulator 1-like-A (mtfr1l-a).